The chain runs to 277 residues: MDNAVDRHVFYISDGTAITAEVLGHAVMSQFPVTISSITLPFVENESRARAVKDQIDAIYHQTGVRPLVFYSIVLPEIRAIILQSEGFCQDIVQALVAPLQQEMQLDPTPIAHRTHGLNPNNLNKYDARIAAIDYTLAHDDGISLRNLDQAQVILLGVSRCGKTPTSLYLAMQFGIRAANYPFIADDMDNLVLPASLKPLQHKLFGLTIDPERLAAIREERRENSRYASLRQCRMEVAEVEALYRKNQIPWINSTNYSVEEIATKILDIMGLSRRMY.

157-164 contributes to the ADP binding site; it reads GVSRCGKT.

It belongs to the pyruvate, phosphate/water dikinase regulatory protein family. PSRP subfamily.

The enzyme catalyses [pyruvate, water dikinase] + ADP = [pyruvate, water dikinase]-phosphate + AMP + H(+). The catalysed reaction is [pyruvate, water dikinase]-phosphate + phosphate + H(+) = [pyruvate, water dikinase] + diphosphate. In terms of biological role, bifunctional serine/threonine kinase and phosphorylase involved in the regulation of the phosphoenolpyruvate synthase (PEPS) by catalyzing its phosphorylation/dephosphorylation. This chain is Phosphoenolpyruvate synthase regulatory protein, found in Escherichia coli O7:K1 (strain IAI39 / ExPEC).